The primary structure comprises 195 residues: Probable GTP-binding protein EngB (195 aa).

In terms of domain architecture, EngB-type G spans 22-195; that stretch reads QLPEIALAGR…WSALSRYIKR (174 aa). Residues 30-37, 57-61, 75-78, 142-145, and 174-176 each bind GTP; these read GRSNVGKS, GKTQT, DVPG, TKLD, and FSA. Residues S37 and T59 each contribute to the Mg(2+) site.

It belongs to the TRAFAC class TrmE-Era-EngA-EngB-Septin-like GTPase superfamily. EngB GTPase family. It depends on Mg(2+) as a cofactor.

Its function is as follows. Necessary for normal cell division and for the maintenance of normal septation. The sequence is that of Probable GTP-binding protein EngB from Oceanobacillus iheyensis (strain DSM 14371 / CIP 107618 / JCM 11309 / KCTC 3954 / HTE831).